A 1682-amino-acid chain; its full sequence is MADLEVYKNLSPEKVERCMSVMQSGTQMIKLKRGTKGLVRLFYLDEHRTRLRWRPSRKSEKAKILIDSIYKVTEGRQSEIFHRQAEGNFDPSCCFTIYHGNHMESLDLITSNPEEARTWITGLKYLMAGISDEDSLAKRQRTHDQWVKQTFEEADKNGDGLLNIEEIHQLMHKLNVNLPRRKVRQMFQEADTDENQGTLTFEEFCVFYKMMSLRRDLYLLLLSYSDKKDHLTVEELAQFLKVEQKMSNVTLDYCLDIIMKFEVSEENKVKNVLGIEGFTNFMRSPACDVFNPLHHEVYQDMDQPLCNYYIASSHNTYLTGDQLLSQSKVDMYARVLQEGCRCVEVDCWDGPDGEPVVHHGYTLTSKILFRDVVETINKHAFVKNEFPVILSIENHCSIQQQRKIAQYLKGILQDKLDLSSVDTGECRQLPSPQSLKGKILVKGKKLPYHLGDDAEEGEVSDEDSADEIEDECKFKLHYSNGTTEHQVESFIRKKLESLLKESQIRDKEDPDSFTVRALLKATHEGLNAHLKQNLDVKESGKKSHGRSLMANFGKHKQKATKSRSKSYSTDDEDDSLQNPGKEGGQLYRLGRRRRTMKLCRELSDLVVYTNSVAAQDIVDDGTTGNVLSFSETRAHQVVQQKSEQFMIYNQKQLTRIYPSAYRIDSSNFNPLPYWNAGCQLVALNYQSEGRMMQINRAKFKANGNCGYILKPQQMCKGTFNPFSGDPLPANPKKQLILKVISGQQLPKPPDSMFGDRGEIIDPFVEVEIIGLPVDCCKDQTRVVDDNGFNPVWEETLTFTVHMPEIALVRFLVWDHDPIGRDFVGQRTVTFSSLVPGYRHVYLEGLTEASIFVHITINEIFGKWSPLILNPSYTILHFLGATKNRQLQGLKGLFNKNPRHASSENNSHYVRKRSIGDRILRRTASAPAKGRKKSKVGFQEMVEIKDSVSEASRDQDGVLRRTTRSLQVRPVSMPVDKSLLGALSLPISEAAKDTDGKENCLAGDKDDRRKGAATRKDPHFSNFNKKLSSSSSALLHKDANQGPTASVSNPEQCGGRGAKSERIKPNMTNDCQENHNPPKFLSPRKHLALDPATKGLQERLHGMKTNEKEHAEGFLGEKSMLSGSVLSQSSLEVENLEGSRAKGRAATSFSLSDVSALCSDIPDLHSTAILQDTEISNLIDDVTLTNENQSGSSISALIGQFEESNHPANVTVVSHLSTSGASGSAPFQTPFKHGLSQGNQKASFLCSSPELNKLSSVETTKLANNAVPCGVIGSPISTPKPGDDPSDKAKTRVIEGNLPGFPDASPGQFPKSPTHGEDHSQVMNSPALSTELAIEDIIADPALSINSAESSLVEIDGESENLSLTTCDYREEAPSQLVSPLKLQQSQEMVEHIQRGLRNGYCKETLLPSEIFNNIPGVKNHSISHLTYQGAGFVYNHFSSSDAKTNQICEPQQPRAPDMHAPTPTPSTHAPLAALKLPSPCKSKSLGDLTSEDIACNFESKYQCISRSFVTNGIRDKSVTMKTKSLEPLDALTEQLRKLVSFDQEDSCQVLYSKQDVNQCPRALVRKLSSRSQSRVRNIASRAKEKQEAGKQKAMAQSTRGGVVLRSKPPAPALAVNRHSTGSYIASYLRNMKAGGLEGRGIPEGACTALRYGYMDQFCSDNSVLQTEPSSEDKPEIYFLLRL.

The PH domain occupies 20–128; sequence SVMQSGTQMI…WITGLKYLMA (109 aa). 3 consecutive EF-hand domains span residues 142–177, 178–214, and 226–246; these read THDQ…LNVN, LPRR…MSLR, and DKKD…EQKM. Asp-155, Asn-157, Asp-159, and Glu-166 together coordinate Ca(2+). The 146-residue stretch at 299-444 folds into the PI-PLC X-box domain; sequence QDMDQPLCNY…LKGKILVKGK (146 aa). Residue His-314 is part of the active site. Ca(2+) is bound by residues Asn-315, Glu-344, and Asp-346. Residue His-358 is part of the active site. A Ca(2+)-binding site is contributed by Glu-393. Residues Lys-442 and Lys-444 each coordinate substrate. The tract at residues 534-588 is disordered; it reads LDVKESGKKSHGRSLMANFGKHKQKATKSRSKSYSTDDEDDSLQNPGKEGGQLYR. Residues 553–564 show a composition bias toward basic residues; it reads GKHKQKATKSRS. The PI-PLC Y-box domain occupies 602–715; it reads LSDLVVYTNS…GYILKPQQMC (114 aa). Positions 628 and 655 each coordinate substrate. The 129-residue stretch at 716-844 folds into the C2 domain; that stretch reads KGTFNPFSGD…PGYRHVYLEG (129 aa). Positions 759, 761, 785, 814, 815, and 816 each coordinate Ca(2+). Positions 992 to 1018 are enriched in basic and acidic residues; the sequence is DTDGKENCLAGDKDDRRKGAATRKDPH. Disordered stretches follow at residues 992 to 1083, 1296 to 1321, and 1581 to 1603; these read DTDG…LSPR, NLPG…HSQV, and RAKE…GGVV. The span at 1019–1033 shows a compositional bias: low complexity; the sequence is FSNFNKKLSSSSSAL. Polar residues-rich tracts occupy residues 1040 to 1050 and 1065 to 1074; these read QGPTASVSNPE and NMTNDCQENH. The span at 1581-1590 shows a compositional bias: basic and acidic residues; the sequence is RAKEKQEAGK.

Ca(2+) serves as cofactor. In terms of tissue distribution, expressed in brain and to a lower extent in lung. In brain, it is found in cerebrum, cerebellum and spinal cord.

It localises to the cytoplasm. The protein resides in the membrane. The catalysed reaction is a 1,2-diacyl-sn-glycero-3-phospho-(1D-myo-inositol-4,5-bisphosphate) + H2O = 1D-myo-inositol 1,4,5-trisphosphate + a 1,2-diacyl-sn-glycerol + H(+). The production of the second messenger molecules diacylglycerol (DAG) and inositol 1,4,5-trisphosphate (IP3) is mediated by calcium-activated phosphatidylinositol-specific phospholipase C enzymes. This chain is 1-phosphatidylinositol 4,5-bisphosphate phosphodiesterase eta-1, found in Mus musculus (Mouse).